The sequence spans 246 residues: Probable transcriptional regulatory protein Ent638_2432 (246 aa).

Belongs to the TACO1 family.

The protein localises to the cytoplasm. In Enterobacter sp. (strain 638), this protein is Probable transcriptional regulatory protein Ent638_2432.